A 138-amino-acid polypeptide reads, in one-letter code: uncharacterized protein (138 aa).

This is an uncharacterized protein from Schizosaccharomyces pombe (strain 972 / ATCC 24843) (Fission yeast).